The primary structure comprises 316 residues: Ornithine carbamoyltransferase (316 aa).

Carbamoyl phosphate contacts are provided by residues 57 to 60, glutamine 84, arginine 108, and 135 to 138; these read STRT and HPCQ. L-ornithine contacts are provided by residues asparagine 166, aspartate 230, and 234–235; that span reads SM. Carbamoyl phosphate is bound by residues 269–270 and arginine 297; that span reads CL.

This sequence belongs to the aspartate/ornithine carbamoyltransferase superfamily. OTCase family.

Its subcellular location is the cytoplasm. The enzyme catalyses carbamoyl phosphate + L-ornithine = L-citrulline + phosphate + H(+). The protein operates within amino-acid biosynthesis; L-arginine biosynthesis; L-arginine from L-ornithine and carbamoyl phosphate: step 1/3. Its function is as follows. Reversibly catalyzes the transfer of the carbamoyl group from carbamoyl phosphate (CP) to the N(epsilon) atom of ornithine (ORN) to produce L-citrulline. The polypeptide is Ornithine carbamoyltransferase (argF) (Bacillus cereus (strain ATCC 14579 / DSM 31 / CCUG 7414 / JCM 2152 / NBRC 15305 / NCIMB 9373 / NCTC 2599 / NRRL B-3711)).